The chain runs to 200 residues: ATP-dependent Clp protease proteolytic subunit (200 aa).

The active-site Nucleophile is Ser-97. His-122 is a catalytic residue.

The protein belongs to the peptidase S14 family. As to quaternary structure, fourteen ClpP subunits assemble into 2 heptameric rings which stack back to back to give a disk-like structure with a central cavity, resembling the structure of eukaryotic proteasomes.

It localises to the cytoplasm. The catalysed reaction is Hydrolysis of proteins to small peptides in the presence of ATP and magnesium. alpha-casein is the usual test substrate. In the absence of ATP, only oligopeptides shorter than five residues are hydrolyzed (such as succinyl-Leu-Tyr-|-NHMec, and Leu-Tyr-Leu-|-Tyr-Trp, in which cleavage of the -Tyr-|-Leu- and -Tyr-|-Trp bonds also occurs).. In terms of biological role, cleaves peptides in various proteins in a process that requires ATP hydrolysis. Has a chymotrypsin-like activity. Plays a major role in the degradation of misfolded proteins. This chain is ATP-dependent Clp protease proteolytic subunit, found in Oleidesulfovibrio alaskensis (strain ATCC BAA-1058 / DSM 17464 / G20) (Desulfovibrio alaskensis).